The following is a 420-amino-acid chain: POU domain, class 4, transcription factor 1 (420 aa).

Residues 57–66 (RAEALAAVDI) carry the POU-IV box motif. Disordered stretches follow at residues 94–117 (STVPLAHHHHHHHHHQALEPGDLL) and 132–200 (GGAG…XGHL). Residues 99-108 (AHHHHHHHHH) show a composition bias toward basic residues. Gly residues-rich tracts occupy residues 132–165 (GGAGAAGGGGAPTRPRGAGGPGGGGGPGGGGPGV) and 172–184 (PGGGGGGPGGGLL). The 78-residue stretch at 261-338 (DSDTDPRELE…ILQAWLEEAE (78 aa)) folds into the POU-specific domain. The homeobox DNA-binding region spans 356-415 (KKRKRTSIAAPEKRSLEAYFAVQPRPSSEKIAAIAEKLDLKKNVVRVWFCNQRQKQKRMK).

The protein belongs to the POU transcription factor family. Class-4 subfamily. Interacts (via N-terminus) with RIT2; the interaction controls POU4F1 transactivation activity on some neuronal target genes. Isoform 1 interacts with POU4F2; this interaction inhibits both POU4F1 DNA-binding and transcriptional activities. Isoform 1 interacts (C-terminus) with ESR1 (via DNA-binding domain); this interaction decreases the estrogen receptor ESR1 transcriptional activity in a DNA- and ligand 17-beta-estradiol-independent manner. Detected in brain, spinal cord and dorsal root ganglion. Isoform 2 is detected in brain, spinal cord, dorsal root ganglion and spleen.

It is found in the nucleus. The protein localises to the cytoplasm. Multifunctional transcription factor with different regions mediating its different effects. Acts by binding (via its C-terminal domain) to sequences related to the consensus octamer motif 5'-ATGCAAAT-3' in the regulatory regions of its target genes. Regulates the expression of specific genes involved in differentiation and survival within a subset of neuronal lineages. It has been shown that activation of some of these genes requires its N-terminal domain, maybe through a neuronal-specific cofactor. Activates BCL2 expression and protects neuronal cells from apoptosis (via the N-terminal domain). Induces neuronal process outgrowth and the coordinate expression of genes encoding synaptic proteins. Exerts its major developmental effects in somatosensory neurons and in brainstem nuclei involved in motor control. Stimulates the binding affinity of the nuclear estrogene receptor ESR1 to DNA estrogen response element (ERE), and hence modulates ESR1-induced transcriptional activity. May positively regulate POU4F2 and POU4F3. Regulates dorsal root ganglion sensory neuron specification and axonal projection into the spinal cord. Plays a role in TNFSF11-mediated terminal osteoclast differentiation. Negatively regulates its own expression interacting directly with a highly conserved autoregulatory domain surrounding the transcription initiation site. Its function is as follows. Able to act as transcription factor, cannot regulate the expression of the same subset of genes than isoform 1. Does not have anitapoptotic effect on neuronal cells. This chain is POU domain, class 4, transcription factor 1 (Pou4f1), found in Rattus norvegicus (Rat).